We begin with the raw amino-acid sequence, 611 residues long: Threonine--tRNA ligase (611 aa).

Residues 211–509 (DHRKLGTELE…LTEHYAGEFP (299 aa)) form a catalytic region. Zn(2+) is bound by residues Cys310, His361, and His486.

The protein belongs to the class-II aminoacyl-tRNA synthetase family. As to quaternary structure, homodimer. Zn(2+) is required as a cofactor.

It localises to the cytoplasm. The catalysed reaction is tRNA(Thr) + L-threonine + ATP = L-threonyl-tRNA(Thr) + AMP + diphosphate + H(+). In terms of biological role, catalyzes the attachment of threonine to tRNA(Thr) in a two-step reaction: L-threonine is first activated by ATP to form Thr-AMP and then transferred to the acceptor end of tRNA(Thr). Also edits incorrectly charged L-seryl-tRNA(Thr). The sequence is that of Threonine--tRNA ligase from Nautilia profundicola (strain ATCC BAA-1463 / DSM 18972 / AmH).